A 323-amino-acid polypeptide reads, in one-letter code: UDP-glucuronate 4-epimerase (323 aa).

Residue 11–13 (GFI) coordinates NAD(+). Tyrosine 152 serves as the catalytic Proton acceptor. Lysine 156 serves as a coordination point for NAD(+).

It belongs to the NAD(P)-dependent epimerase/dehydratase family. NAD(+) is required as a cofactor.

The enzyme catalyses UDP-alpha-D-glucuronate = UDP-alpha-D-galacturonate. In terms of biological role, catalyzes the interconversion of UDP-D-glucuronic acid (UDP-GlcA) and UDP-D-galacturonic acid (UDP-GalA). The sequence is that of UDP-glucuronate 4-epimerase from Thermodesulfobacterium geofontis (strain OPF15).